Consider the following 509-residue polypeptide: Maturase K (509 aa).

Belongs to the intron maturase 2 family. MatK subfamily.

It localises to the plastid. The protein localises to the chloroplast. Its function is as follows. Usually encoded in the trnK tRNA gene intron. Probably assists in splicing its own and other chloroplast group II introns. This is Maturase K from Nicotiana plumbaginifolia (Leadwort-leaved tobacco).